The primary structure comprises 350 residues: tRNA uridine(34) hydroxylase (350 aa).

A Rhodanese domain is found at 146 to 240; the sequence is DDPDAVFIDM…YARRAREQGL (95 aa). C200 serves as the catalytic Cysteine persulfide intermediate. Residues 319–328 are compositionally biased toward basic and acidic residues; that stretch reads RRRRAGRENG. Residues 319–350 form a disordered region; that stretch reads RRRRAGRENGNKIFNKSRGRLNSKLSIPDPAE.

Belongs to the TrhO family.

It carries out the reaction uridine(34) in tRNA + AH2 + O2 = 5-hydroxyuridine(34) in tRNA + A + H2O. In terms of biological role, catalyzes oxygen-dependent 5-hydroxyuridine (ho5U) modification at position 34 in tRNAs. This Salmonella heidelberg (strain SL476) protein is tRNA uridine(34) hydroxylase.